Consider the following 308-residue polypeptide: CASP-like protein 4A2 (308 aa).

The segment at 1–135 (MALEAQPSPS…APAPAPRVPA (135 aa)) is disordered. Residues 1-161 (MALEAQPSPS…KRPTAVLQRT (161 aa)) are Cytoplasmic-facing. Positions 22 to 31 (GGAGAPGGSA) are enriched in gly residues. Residues 32–44 (GDADAQARRATSG) are compositionally biased toward low complexity. Pro residues-rich tracts occupy residues 54 to 65 (RRSPPPPFPRTP) and 89 to 132 (FQPP…PAPR). A helical membrane pass occupies residues 162–182 (ALVARVAAALLCLAALAVLAA). Topologically, residues 183-203 (DSRKGFALDSYSNYSQLRYSE) are extracellular. N-linked (GlcNAc...) asparagine glycosylation is present at asparagine 195. The helical transmembrane segment at 204–224 (AVNVIGFVYSVLQFFVLADLM) threads the bilayer. Topologically, residues 225-240 (RRNKHLNPRRKGDYFD) are cytoplasmic. Residues 241 to 262 (FFMDQVLAYLLISSSSSATARV) traverse the membrane as a helical segment. At 263 to 280 (GDWIDNWGSDPFPKMANS) the chain is on the extracellular side. N-linked (GlcNAc...) asparagine glycosylation is present at asparagine 279. The helical transmembrane segment at 281 to 301 (SIAISFMAFLVFAISALISAY) threads the bilayer. The Cytoplasmic segment spans residues 302–308 (NLFRRDI).

The protein belongs to the Casparian strip membrane proteins (CASP) family. In terms of assembly, homodimer and heterodimers.

The protein resides in the cell membrane. The protein is CASP-like protein 4A2 of Oryza sativa subsp. japonica (Rice).